Consider the following 256-residue polypeptide: Leucine-rich repeat-containing protein 18 (256 aa).

LRR repeat units follow at residues 28-49 (GRKR…ILRL), 51-72 (EIDE…ISKF), 74-95 (NLRW…IGQM), 97-118 (SLLF…VELN), 122-144 (NIRT…GALK), 145-167 (ELHE…SKLP), 168-189 (KLKK…DMFV), and 194-215 (RLEN…QKCQ).

It is found in the cytoplasm. In terms of biological role, may be involved in the regulation of spermatogenesis and sperm maturation. The sequence is that of Leucine-rich repeat-containing protein 18 (Lrrc18) from Rattus norvegicus (Rat).